The following is a 377-amino-acid chain: Apelin receptor (377 aa).

At 1-28 the chain is on the extracellular side; it reads MEDDGYNYYGADNQSECDYADWTPSGAL. A glycan (N-linked (GlcNAc...) asparagine) is linked at Asn-13. Disulfide bonds link Cys-17–Cys-279 and Cys-100–Cys-179. Residues 29–52 form a helical membrane-spanning segment; sequence IPAIYILVFLLGTTGNGLVLWTVF. The Cytoplasmic portion of the chain corresponds to 53–62; that stretch reads WSSREKRRSA. The chain crosses the membrane as a helical span at residues 63–84; that stretch reads DIFIASLAVADLTFVVTLPLWA. Residues 85–97 lie on the Extracellular side of the membrane; sequence TYTYREFDWPFGT. A helical transmembrane segment spans residues 98-123; that stretch reads FSCKLSSYLIFVNMYASVFCLTGLSF. Topologically, residues 124 to 144 are cytoplasmic; sequence DRYLAIVRPVANARLRLRVSG. Residues 145-162 form a helical membrane-spanning segment; that stretch reads AVATAVLWVLAALLAVPV. Topologically, residues 163–196 are extracellular; that stretch reads MVFRSTDIPENSTKTQCYMDYSMVATSNSEWAWE. An N-linked (GlcNAc...) asparagine glycan is attached at Asn-173. Residues 197-221 traverse the membrane as a helical segment; the sequence is VGLGVSSTAVGFVVPFIIMLTCYFF. At 222-244 the chain is on the cytoplasmic side; sequence IAQTIAGHFRKERIEGLRKRRRL. The chain crosses the membrane as a helical span at residues 245-268; that stretch reads LSIIVVLVVTFALCWMPYHLVKTL. The Extracellular segment spans residues 269–287; the sequence is YMLGNLLHWPCDFDSFLMN. Residues 288 to 310 form a helical membrane-spanning segment; sequence VFPYCTCISYVNSCLNPFLYAFF. The Cytoplasmic portion of the chain corresponds to 311–377; it reads DPRFRRACTS…IPYSQETLVD (67 aa). Residues 335 to 349 show a composition bias toward low complexity; that stretch reads SSSAEKSASYSSGHS. Residues 335-377 form a disordered region; it reads SSSAEKSASYSSGHSQGPGPNMCKGGEPMHEKSIPYSQETLVD.

This sequence belongs to the G-protein coupled receptor 1 family. As to quaternary structure, homodimer; dimerization inhibits APLNR-mediated G protein and beta-arrestin signaling pathways compared to monomeric APLNR. In terms of tissue distribution, widely expressed. Highest expression in the lung, lower in the heart, placenta, ovary, skeletal muscle, mammary gland, kidney and several structures in the brain as the hypothalamus (supraoptic and periventricular nuclei), pituitary, olfactory bulb and pineal gland.

It is found in the cell membrane. G protein-coupled receptor for peptide hormones apelin (APLN) and apelin receptor early endogenous ligand (APELA/ELA), that plays a role in the regulation of normal cardiovascular function and fluid homeostasis. When acting as apelin receptor, activates both G(i) protein pathway that inhibits adenylate cyclase activity, and the beta-arrestin pathway that promotes internalization of the receptor. APLNR/APJ also functions as mechanoreceptor that is activated by pathological stimuli in a G-protein-independent fashion to induce beta-arrestin signaling, hence eliciting cardiac hypertrophy. However, the presence of apelin ligand blunts cardiac hypertrophic induction from APLNR/APJ on response to pathological stimuli. Plays a key role in early development such as gastrulation, blood vessels formation and heart morphogenesis by acting as a APELA receptor. May promote angioblast migration toward the embryonic midline, i.e. the position of the future vessel formation, during vasculogenesis. Promotes sinus venosus (SV)-derived endothelial cells migration into the developing heart to promote coronary blood vessel development. Also plays a role in various processes in adults such as regulation of blood vessel formation, blood pressure, heart contractility and heart failure. This is Apelin receptor from Rattus norvegicus (Rat).